Reading from the N-terminus, the 555-residue chain is Methionine--tRNA ligase (555 aa).

Residues 13-23 (PYANGSLHIGH) carry the 'HIGH' region motif. Cys-144, Cys-147, Cys-157, and Cys-160 together coordinate Zn(2+). Positions 330-334 (KISKS) match the 'KMSKS' region motif. Lys-333 serves as a coordination point for ATP.

It belongs to the class-I aminoacyl-tRNA synthetase family. MetG type 1 subfamily. As to quaternary structure, monomer. The cofactor is Zn(2+).

It is found in the cytoplasm. The enzyme catalyses tRNA(Met) + L-methionine + ATP = L-methionyl-tRNA(Met) + AMP + diphosphate. In terms of biological role, is required not only for elongation of protein synthesis but also for the initiation of all mRNA translation through initiator tRNA(fMet) aminoacylation. This Blochmanniella pennsylvanica (strain BPEN) protein is Methionine--tRNA ligase.